A 393-amino-acid chain; its full sequence is Thyrotropin-releasing hormone receptor (393 aa).

At 1–28 the chain is on the extracellular side; sequence MENDTVSEMNQTELQPQAAVALEYQVVT. N-linked (GlcNAc...) asparagine glycosylation is found at Asn-3 and Asn-10. The chain crosses the membrane as a helical span at residues 29–51; it reads ILLVVIICGLGIVGNIMVVLVVM. Topologically, residues 52 to 61 are cytoplasmic; the sequence is RTKHMRTPTN. A helical membrane pass occupies residues 62 to 83; it reads CYLVSLAVADLMVLVAAGLPNI. Residues 84–99 lie on the Extracellular side of the membrane; that stretch reads TDSIYGSWVYGYVGCL. A disulfide bridge links Cys-98 with Cys-179. The chain crosses the membrane as a helical span at residues 100–121; that stretch reads CITYLQYLGINASSCSITAFTI. The Cytoplasmic segment spans residues 122–144; that stretch reads ERYIAICHPIKAQFLCTFSRAKK. A helical transmembrane segment spans residues 145-168; the sequence is IIIFVWAFTSIYCMLWFFLLDLNI. Over 169–193 the chain is Extracellular; that stretch reads STYKNAVVVSCGYKISRNYYSPIYL. The chain crosses the membrane as a helical span at residues 194–215; that stretch reads MDFGVFYVVPMILATVLYGFIA. Topologically, residues 216–266 are cytoplasmic; it reads RILFLNPIPSDPKENSKMWKNDSIHQNKNLNLNATNRCFNSTVSSRKQVTK. A helical transmembrane segment spans residues 267 to 288; that stretch reads MLAVVVILFALLWMPYRTLVVV. At 289-296 the chain is on the extracellular side; sequence NSFLSSPF. Residues 297-319 traverse the membrane as a helical segment; sequence QENWFLLFCRICIYLNSAINPVI. The Cytoplasmic segment spans residues 320 to 393; that stretch reads YNLMSQKFRA…FDDTCLASEN (74 aa).

Belongs to the G-protein coupled receptor 1 family.

The protein resides in the cell membrane. Functionally, receptor for thyrotropin-releasing hormone (TRH). Upon ligand binding, this G-protein-coupled receptor triggers activation of the phosphatidylinositol (IP3)-calcium-protein kinase C (PKC) pathway. In Mus musculus (Mouse), this protein is Thyrotropin-releasing hormone receptor (Trhr).